We begin with the raw amino-acid sequence, 541 residues long: GTPase Obg (541 aa).

The Obg domain occupies 2 to 159; that stretch reads PTFVDRVVLH…LDAVLELKSV (158 aa). The interval 63-84 is disordered; that stretch reads HPHQRAGGGRPGQGSNRHGADG. One can recognise an OBG-type G domain in the interval 160 to 332; it reads ADVALVGFPS…LALALAELVA (173 aa). GTP-binding positions include 166-173, 191-195, 213-216, 284-287, and 313-315; these read GFPSAGKS, FTTLV, DVPG, NKVD, and STA. Residues serine 173 and threonine 193 each coordinate Mg(2+). One can recognise an OCT domain in the interval 350 to 427; it reads PRAVDEPDFT…IGAVTFDWEP (78 aa). The interval 497–541 is disordered; the sequence is KRLTRAQRTALSDSADDFDDGAGFSDSAAFGDSGGSGGDADGGRG. The segment covering 517–527 has biased composition (low complexity); the sequence is GAGFSDSAAFG. Over residues 528 to 541 the composition is skewed to gly residues; sequence DSGGSGGDADGGRG.

This sequence belongs to the TRAFAC class OBG-HflX-like GTPase superfamily. OBG GTPase family. Monomer. It depends on Mg(2+) as a cofactor.

The protein resides in the cytoplasm. An essential GTPase which binds GTP, GDP and possibly (p)ppGpp with moderate affinity, with high nucleotide exchange rates and a fairly low GTP hydrolysis rate. Plays a role in control of the cell cycle, stress response, ribosome biogenesis and in those bacteria that undergo differentiation, in morphogenesis control. The polypeptide is GTPase Obg (Parafrankia sp. (strain EAN1pec)).